The chain runs to 165 residues: Keratin-associated protein 5-7 (165 aa).

7 consecutive repeat copies span residues 35 to 38 (CCVP), 41 to 44 (CCKP), 47 to 50 (CCVP), 116 to 119 (CCKP), 126 to 129 (CCKP), 145 to 148 (CCNP), and 155 to 158 (CCVP). Positions 35-158 (CCVPVCCCKP…CCSQSSCCVP (124 aa)) are 7 X 4 AA repeats of C-C-X-P.

Belongs to the KRTAP type 5 family. In terms of assembly, interacts with hair keratins. Expressed in hair root but not in skin.

Its function is as follows. In the hair cortex, hair keratin intermediate filaments are embedded in an interfilamentous matrix, consisting of hair keratin-associated protein (KRTAP), which are essential for the formation of a rigid and resistant hair shaft through their extensive disulfide bond cross-linking with abundant cysteine residues of hair keratins. The matrix proteins include the high-sulfur and high-glycine-tyrosine keratins. This Homo sapiens (Human) protein is Keratin-associated protein 5-7 (KRTAP5-7).